A 187-amino-acid chain; its full sequence is Probable RNA 2'-phosphotransferase (187 aa).

It belongs to the KptA/TPT1 family.

Functionally, removes the 2'-phosphate from RNA via an intermediate in which the phosphate is ADP-ribosylated by NAD followed by a presumed transesterification to release the RNA and generate ADP-ribose 1''-2''-cyclic phosphate (APPR&gt;P). May function as an ADP-ribosylase. In Pseudomonas syringae pv. tomato (strain ATCC BAA-871 / DC3000), this protein is Probable RNA 2'-phosphotransferase.